The primary structure comprises 247 residues: Isoprenyl transferase (247 aa).

Aspartate 18 is an active-site residue. Mg(2+) is bound at residue aspartate 18. Substrate-binding positions include 19–22 (GNGR), tryptophan 23, arginine 31, histidine 35, and 63–65 (SSE). Asparagine 66 functions as the Proton acceptor in the catalytic mechanism. Residues tryptophan 67, arginine 69, arginine 186, and 192–194 (RLS) each bind substrate. Glutamate 205 provides a ligand contact to Mg(2+).

This sequence belongs to the UPP synthase family. As to quaternary structure, homodimer. The cofactor is Mg(2+).

Its function is as follows. Catalyzes the condensation of isopentenyl diphosphate (IPP) with allylic pyrophosphates generating different type of terpenoids. This is Isoprenyl transferase from Agrobacterium fabrum (strain C58 / ATCC 33970) (Agrobacterium tumefaciens (strain C58)).